A 130-amino-acid polypeptide reads, in one-letter code: Small ribosomal subunit protein uS9 (130 aa).

Belongs to the universal ribosomal protein uS9 family.

The sequence is that of Small ribosomal subunit protein uS9 from Desulfovibrio desulfuricans (strain ATCC 27774 / DSM 6949 / MB).